We begin with the raw amino-acid sequence, 297 residues long: Developmental pluripotency-associated protein 4 (297 aa).

The interval 1 to 77 (MEPSGSKKGR…KVPVPPFPQH (77 aa)) is disordered. Low complexity predominate over residues 23–34 (SSQPSTSSAKTK). Over residues 43–63 (SEKDDGCKPEEKSAQDPETPG) the composition is skewed to basic and acidic residues. Residue S211 is modified to Phosphoserine.

As to quaternary structure, interacts with DPPA2. Interacts with PCGF1.

The protein resides in the nucleus. Functionally, may be involved in the maintenance of active epigenetic status of target genes. May inhibit differentiation of embryonic stem (ES) cells into a primitive ectoderm lineage. The polypeptide is Developmental pluripotency-associated protein 4 (Dppa4) (Rattus norvegicus (Rat)).